The sequence spans 164 residues: MAIRPILPYPHAGLSGICAPVTVFDDHLRELVTDLIDTMRAAPGVGITAAHIGVLQRVFVLELTPGTILTYINPEITSHSPQTMRHVEGSVSMPGFTDEVERPSTVEVRFQDITGAEQTETAEGFHAICIQHEIDQLDGIFWLKRLSRLKRDRLVKKWEKSRNP.

Residue Glu133 is part of the active site.

Belongs to the polypeptide deformylase family.

The chain is Peptide deformylase-like from Agrobacterium fabrum (strain C58 / ATCC 33970) (Agrobacterium tumefaciens (strain C58)).